A 284-amino-acid chain; its full sequence is Bifunctional protein FolD (284 aa).

NADP(+) is bound by residues G165 to S167, S190, and I231.

It belongs to the tetrahydrofolate dehydrogenase/cyclohydrolase family. As to quaternary structure, homodimer.

It carries out the reaction (6R)-5,10-methylene-5,6,7,8-tetrahydrofolate + NADP(+) = (6R)-5,10-methenyltetrahydrofolate + NADPH. The catalysed reaction is (6R)-5,10-methenyltetrahydrofolate + H2O = (6R)-10-formyltetrahydrofolate + H(+). It participates in one-carbon metabolism; tetrahydrofolate interconversion. Its function is as follows. Catalyzes the oxidation of 5,10-methylenetetrahydrofolate to 5,10-methenyltetrahydrofolate and then the hydrolysis of 5,10-methenyltetrahydrofolate to 10-formyltetrahydrofolate. This chain is Bifunctional protein FolD, found in Clostridium kluyveri (strain ATCC 8527 / DSM 555 / NBRC 12016 / NCIMB 10680 / K1).